Consider the following 186-residue polypeptide: Transcription factor HES-3 (186 aa).

A bHLH domain is found at 1-49 (MEKKRRARINVSLEQLKSLLEKHYSHQIRKRKLEKADILELSVKYMRSL). Residues 65-99 (QPSGFRSCLPGVSQLLRRGDEVGSGLRCPLVPESA) form the Orange domain. The tract at residues 128-186 (APAAGGPRSPPPLLLLPESLPGSSASVPPPQPASSRCAESPGLGLRVWRPWGSPGDDLN) is disordered. Over residues 142–153 (LLPESLPGSSAS) the composition is skewed to low complexity. A WRPW motif motif is present at residues 175–178 (WRPW).

In terms of assembly, transcription repression requires formation of a complex with a corepressor protein of the Groucho/TLE family.

It localises to the nucleus. Its function is as follows. Transcriptional repressor of genes that require a bHLH protein for their transcription. This Homo sapiens (Human) protein is Transcription factor HES-3 (HES3).